Consider the following 240-residue polypeptide: Keratinocyte-associated protein 3 (240 aa).

4 consecutive transmembrane segments (helical) span residues Val-21–Gly-41, Val-63–Ser-83, Leu-95–Leu-115, and Ala-163–Tyr-183.

The protein belongs to the TMEM54 family.

The protein localises to the membrane. The sequence is that of Keratinocyte-associated protein 3 (KRTCAP3) from Bos taurus (Bovine).